We begin with the raw amino-acid sequence, 514 residues long: Histidine ammonia-lyase (514 aa).

Positions 146–148 form a cross-link, 5-imidazolinone (Ala-Gly); the sequence is ASG. The residue at position 147 (Ser147) is a 2,3-didehydroalanine (Ser).

Belongs to the PAL/histidase family. Post-translationally, contains an active site 4-methylidene-imidazol-5-one (MIO), which is formed autocatalytically by cyclization and dehydration of residues Ala-Ser-Gly.

The protein resides in the cytoplasm. It catalyses the reaction L-histidine = trans-urocanate + NH4(+). The protein operates within amino-acid degradation; L-histidine degradation into L-glutamate; N-formimidoyl-L-glutamate from L-histidine: step 1/3. This is Histidine ammonia-lyase from Clostridium tetani (strain Massachusetts / E88).